A 93-amino-acid chain; its full sequence is C-C motif chemokine 14 (93 aa).

The N-terminal stretch at 1–19 (MKISVAAIPFFLLITIALG) is a signal peptide. O-linked (GalNAc...) serine; partial glycosylation is present at serine 26. Disulfide bonds link cysteine 35–cysteine 59 and cysteine 36–cysteine 75.

It belongs to the intercrine beta (chemokine CC) family. The N-terminal processed forms HCC-1(3-74), HCC-1(4-74) and HCC-1(9-74) are produced in small amounts by proteolytic cleavage after secretion in blood. In terms of processing, HCC-1(1-74), but not HCC-1(3-74) and HCC-1(4-74), is partially O-glycosylated; the O-linked glycan consists of one Gal-GalNAc disaccharide, further modified by two N-acetylneuraminic acids. Expressed constitutively in several normal tissues: spleen, liver, skeletal and heart muscle, gut, and bone marrow, present at high concentrations (1-80 nM) in plasma.

It localises to the secreted. Functionally, has weak activities on human monocytes and acts via receptors that also recognize MIP-1 alpha. It induces intracellular Ca(2+) changes and enzyme release, but no chemotaxis, at concentrations of 100-1,000 nM, and is inactive on T-lymphocytes, neutrophils, and eosinophil leukocytes. Enhances the proliferation of CD34 myeloid progenitor cells. The processed form HCC-1(9-74) is a chemotactic factor that attracts monocytes, eosinophils, and T-cells and is a ligand for CCR1, CCR3 and CCR5. The protein is C-C motif chemokine 14 (CCL14) of Homo sapiens (Human).